The following is an 863-amino-acid chain: Facilitated trehalose transporter Tret1 (863 aa).

Residues 1–208 (MSGRDNRGAG…RIGFQQQKAT (208 aa)) are disordered. The Cytoplasmic segment spans residues 1-398 (MSGRDNRGAG…VYRPTTNPIY (398 aa)). A compositionally biased stretch (basic and acidic residues) spans 28–46 (KLKEKLTRAGEELGYHRVE). Residues 47-59 (SNLSASNTGTSLD) show a composition bias toward polar residues. Positions 72-85 (AAPQRHPQQQFPHL) are enriched in low complexity. Polar residues-rich tracts occupy residues 114–129 (PPQQ…RSSG) and 177–187 (KPQQQGNNKAA). Phosphoserine is present on residues S254, S255, and S256. The segment at 286-307 (VLQGSSTDSDEEGDDAEHKRLI) is disordered. Phosphoserine occurs at positions 326 and 328. The segment at 332–354 (FLTSRQNFQQQRSISTDSRKSRR) is disordered. The segment covering 336–347 (RQNFQQQRSIST) has biased composition (polar residues). The chain crosses the membrane as a helical span at residues 399–419 (IWTQVLAALSVSLGSLVVGFA). Residues 420–446 (SAYTSPALVSMTNTNLTSFVVTPQAAS) are Extracellular-facing. N434 carries N-linked (GlcNAc...) asparagine glycosylation. The chain crosses the membrane as a helical span at residues 447–467 (WVGGIMPLAGLAGGIAGGPFI). The Cytoplasmic segment spans residues 468–479 (EYLGRRNTILAT). Residues 480 to 500 (AVPFIISWLLIACAVNVVMVL) form a helical membrane-spanning segment. Topologically, residues 501-503 (CGR) are extracellular. The helical transmembrane segment at 504–524 (FLAGFCVGIASLSLPVYLGET) threads the bilayer. At 525–530 (VQPEVR) the chain is on the cytoplasmic side. Residues 531 to 551 (GTLGLLPTAFGNIGILLCFVA) form a helical membrane-spanning segment. Over 552-558 (GTYMDWS) the chain is Extracellular. The helical transmembrane segment at 559-579 (MLAFLGGTLPVPFLILMFLIP) threads the bilayer. Residues 580 to 642 (ETPRWYVSRG…ELLKRSNLKP (63 aa)) are Cytoplasmic-facing. Residues 643-663 (LSISLGLMFFQQLSGINAVIF) traverse the membrane as a helical segment. At 664–679 (YTVQIFQDAGSTIDGN) the chain is on the extracellular side. The helical transmembrane segment at 680-700 (VCTIIVGVVNFMATFIATVLI) threads the bilayer. Over 701 to 706 (DRAGRK) the chain is Cytoplasmic. Residues 707–727 (ILLYVSNVAMILTLFVLGGFF) traverse the membrane as a helical segment. Over 728-746 (YCKSTGMDTSNVGWLPLSC) the chain is Extracellular. A helical membrane pass occupies residues 747–767 (FVVYILGFSLGFGPIPWLMMG). The Cytoplasmic segment spans residues 768 to 773 (EILPAK). Residues 774 to 794 (IRGSAASVATAFNWSCTFVVT) traverse the membrane as a helical segment. Topologically, residues 795–807 (KSFQDMIDVMGAH) are extracellular. The helical transmembrane segment at 808–828 (GAFWMFGAICFVGLFFVIFYV) threads the bilayer. At 829–863 (PETQGKTLEDIERKMMGRVRRMSSVANIKPLSFNM) the chain is on the cytoplasmic side. S851 and S852 each carry phosphoserine.

Belongs to the major facilitator superfamily. Sugar transporter (TC 2.A.1.1) family. Trehalose transporter subfamily.

It localises to the cell membrane. Its function is as follows. Low-capacity facilitative transporter for trehalose. Does not transport maltose, sucrose or lactose. Mediates the bidirectional transfer of trehalose. Responsible for the transport of trehalose synthesized in the fat body and the incorporation of trehalose into other tissues that require a carbon source, thereby regulating trehalose levels in the hemolymph. In Drosophila mojavensis (Fruit fly), this protein is Facilitated trehalose transporter Tret1.